The chain runs to 532 residues: tRNA-2-methylthio-N(6)-dimethylallyladenosine synthase (532 aa).

The interval Met1 to Met21 is disordered. Residues Arg24–His140 form the MTTase N-terminal domain. 6 residues coordinate [4Fe-4S] cluster: Cys33, Cys69, Cys103, Cys177, Cys181, and Cys184. The 237-residue stretch at Arg163–Glu399 folds into the Radical SAM core domain. The 69-residue stretch at Arg402–Ile470 folds into the TRAM domain. A disordered region spans residues Thr510–Gln532. The segment covering Gly523–Gln532 has biased composition (low complexity).

The protein belongs to the methylthiotransferase family. MiaB subfamily. As to quaternary structure, monomer. [4Fe-4S] cluster serves as cofactor.

The protein resides in the cytoplasm. The catalysed reaction is N(6)-dimethylallyladenosine(37) in tRNA + (sulfur carrier)-SH + AH2 + 2 S-adenosyl-L-methionine = 2-methylsulfanyl-N(6)-dimethylallyladenosine(37) in tRNA + (sulfur carrier)-H + 5'-deoxyadenosine + L-methionine + A + S-adenosyl-L-homocysteine + 2 H(+). Its function is as follows. Catalyzes the methylthiolation of N6-(dimethylallyl)adenosine (i(6)A), leading to the formation of 2-methylthio-N6-(dimethylallyl)adenosine (ms(2)i(6)A) at position 37 in tRNAs that read codons beginning with uridine. The chain is tRNA-2-methylthio-N(6)-dimethylallyladenosine synthase from Mycobacterium ulcerans (strain Agy99).